Reading from the N-terminus, the 176-residue chain is Prepronociceptin (176 aa).

The first 19 residues, 1–19 (MKVLLCDLLLLSLFSSVFS), serve as a signal peptide directing secretion. Propeptides lie at residues 20 to 95 (SCQR…MQHL) and 169 to 176 (TLHQNGNV).

Belongs to the opioid neuropeptide precursor family. Post-translationally, specific enzymatic cleavages at paired basic residues probably yield other active peptides besides nociceptin. In terms of processing, the N-terminal domain contains 6 conserved cysteines thought to be involved in disulfide bonding and/or processing. Predominantly expressed in the brain and spinal cord. Also expressed and secreted by peripheral blood neutrophils following degranulation.

It localises to the secreted. Functionally, ligand of the opioid receptor-like receptor OPRL1. It may act as a transmitter in the brain by modulating nociceptive and locomotor behavior. May be involved in neuronal differentiation and development. Its function is as follows. Blocks nociceptin action in pain transmission by inhibiting nociceptin-induced hyperalgesia and allodynia. In terms of biological role, has potent analgesic activity. The polypeptide is Prepronociceptin (PNOC) (Homo sapiens (Human)).